The following is a 156-amino-acid chain: Ribosomal RNA large subunit methyltransferase H (156 aa).

Residues leucine 72, glycine 104, and leucine 123–leucine 128 each bind S-adenosyl-L-methionine.

Belongs to the RNA methyltransferase RlmH family. In terms of assembly, homodimer.

The protein resides in the cytoplasm. The enzyme catalyses pseudouridine(1915) in 23S rRNA + S-adenosyl-L-methionine = N(3)-methylpseudouridine(1915) in 23S rRNA + S-adenosyl-L-homocysteine + H(+). Functionally, specifically methylates the pseudouridine at position 1915 (m3Psi1915) in 23S rRNA. This chain is Ribosomal RNA large subunit methyltransferase H, found in Maridesulfovibrio salexigens (strain ATCC 14822 / DSM 2638 / NCIMB 8403 / VKM B-1763) (Desulfovibrio salexigens).